The primary structure comprises 85 residues: UPF0291 protein SGO_0570 (85 aa).

Residues 56 to 85 are disordered; the sequence is EDGNDVTPEKLRQVQREKGLHGRSLDDPNS. Over residues 62-85 the composition is skewed to basic and acidic residues; that stretch reads TPEKLRQVQREKGLHGRSLDDPNS.

The protein belongs to the UPF0291 family.

Its subcellular location is the cytoplasm. In Streptococcus gordonii (strain Challis / ATCC 35105 / BCRC 15272 / CH1 / DL1 / V288), this protein is UPF0291 protein SGO_0570.